The sequence spans 119 residues: Large ribosomal subunit protein uL18 (119 aa).

Belongs to the universal ribosomal protein uL18 family. As to quaternary structure, part of the 50S ribosomal subunit; part of the 5S rRNA/L5/L18/L25 subcomplex. Contacts the 5S and 23S rRNAs.

Its function is as follows. This is one of the proteins that bind and probably mediate the attachment of the 5S RNA into the large ribosomal subunit, where it forms part of the central protuberance. The protein is Large ribosomal subunit protein uL18 of Xanthomonas oryzae pv. oryzae (strain MAFF 311018).